Consider the following 636-residue polypeptide: tRNA uridine 5-carboxymethylaminomethyl modification enzyme MnmG (636 aa).

18–23 lines the FAD pocket; it reads GAGHAG. 281 to 295 provides a ligand contact to NAD(+); sequence GPRYCPSIEDKIVRF.

It belongs to the MnmG family. Homodimer. Heterotetramer of two MnmE and two MnmG subunits. FAD serves as cofactor.

It localises to the cytoplasm. Its function is as follows. NAD-binding protein involved in the addition of a carboxymethylaminomethyl (cmnm) group at the wobble position (U34) of certain tRNAs, forming tRNA-cmnm(5)s(2)U34. In Lactiplantibacillus plantarum (strain ATCC BAA-793 / NCIMB 8826 / WCFS1) (Lactobacillus plantarum), this protein is tRNA uridine 5-carboxymethylaminomethyl modification enzyme MnmG.